The chain runs to 480 residues: RAC-alpha serine/threonine-protein kinase (480 aa).

Positions 5 to 108 constitute a PH domain; sequence AIVKEGWLHK…WATAIQTVAD (104 aa). N6-acetyllysine occurs at positions 14 and 20. Residue 14–19 participates in 1D-myo-inositol 1,3,4,5-tetrakisphosphate binding; that stretch reads KRGEYI. Residues 23–25 and Asn-53 each bind 1D-myo-inositol 1,3,4,5-tetrakisphosphate; that span reads RPR. Cys-60 and Cys-77 are joined by a disulfide. Residue Arg-86 participates in 1D-myo-inositol 1,3,4,5-tetrakisphosphate binding. Positions 114–137 are disordered; that stretch reads EEETMDFRSGSPSDNSGAEEMEVS. A Phosphoserine modification is found at Ser-124. Residues Ser-126 and Ser-129 each carry the phosphoserine; alternate modification. 2 O-linked (GlcNAc) serine; alternate glycosylation sites follow: Ser-126 and Ser-129. A Protein kinase domain is found at 150–408; the sequence is FEYLKLLGKG…AKEIMQHRFF (259 aa). 156–164 lines the ATP pocket; the sequence is LGKGTFGKV. Tyr-176 carries the phosphotyrosine; by TNK2 modification. Lys-179 serves as a coordination point for ATP. Asp-274 acts as the Proton acceptor in catalysis. Residue Lys-284 forms a Glycyl lysine isopeptide (Lys-Gly) (interchain with G-Cter in ubiquitin) linkage. Residues Cys-296 and Cys-310 are joined by a disulfide bond. Residue Thr-305 is glycosylated (O-linked (GlcNAc) threonine). Thr-308 carries the post-translational modification Phosphothreonine; by IKKE, PDPK1 and TBK1. Thr-312 carries an O-linked (GlcNAc) threonine glycan. In terms of domain architecture, AGC-kinase C-terminal spans 409-480; that stretch reads ANIVWQDVYE…QFSYSASGTA (72 aa). Phosphothreonine is present on Thr-448. A Phosphothreonine; by MTOR modification is found at Thr-450. A disordered region spans residues 450-480; sequence TPPDQDDSMECVDSERRPHFPQFSYSASGTA. Ser-473 is a glycosylation site (O-linked (GlcNAc) serine; alternate). Ser-473 carries the post-translational modification Phosphoserine; by IKKE, MTOR, PRKDC and TBK1; alternate. Tyr-474 carries the phosphotyrosine modification. Ser-477 carries the post-translational modification Phosphoserine; by CDK2 and MTOR. The residue at position 479 (Thr-479) is a Phosphothreonine; by CDK2 and MTOR.

This sequence belongs to the protein kinase superfamily. AGC Ser/Thr protein kinase family. RAC subfamily. Interacts with and phosphorylated by PDPK1. Interacts with AGAP2 (isoform 2/PIKE-A); the interaction occurs in the presence of guanine nucleotides. Interacts with AKTIP. Interacts (via PH domain) with MTCP1, TCL1A and TCL1B. Interacts with CDKN1B; the interaction phosphorylates CDKN1B promoting 14-3-3 binding and cell-cycle progression. Interacts with MAP3K5 and TRAF6. Interacts with BAD, PPP2R5B, STK3 and STK4. Interacts (via PH domain) with SIRT1. Interacts with SRPK2 in a phosphorylation-dependent manner. Interacts with TRIM13; the interaction ubiquitinates AKT1 leading to its proteasomal degradation. Interacts with RAF1. Interacts (via the C-terminus) with CCDC88A (via its C-terminus) and THEM4 (via its C-terminus). Interacts with GRB10; the interaction leads to GRB10 phosphorylation thus promoting YWHAE-binding. Interacts with KCTD20. Interacts with BTBD10. Interacts with PA2G4. Interacts with KIF14; the interaction is detected in the plasma membrane upon INS stimulation and promotes AKT1 phosphorylation. Interacts with FAM83B; activates the PI3K/AKT signaling cascade. Interacts with WDFY2 (via WD repeats 1-3). Forms a complex with WDFY2 and FOXO1. Interacts with FAM168A. Interacts with SYAP1 (via phosphorylated form and BSD domain); this interaction is enhanced in a mTORC2-mediated manner in response to epidermal growth factor (EGF) stimulation and activates AKT1. Interacts with PKHM3. Interacts with FKBP5/FKBP51; promoting interaction between Akt/AKT1 and PHLPP1, thereby enhancing dephosphorylation and subsequent activation of Akt/AKT1. Interacts with TMEM175; leading to formation of the lysoK(GF) complex. Post-translationally, O-GlcNAcylation at Thr-305 and Thr-312 inhibits activating phosphorylation at Thr-308 via disrupting the interaction between AKT1 and PDPK1. O-GlcNAcylation at Ser-473 also probably interferes with phosphorylation at this site. Phosphorylation on Thr-308, Ser-473 and Tyr-474 is required for full activity. Phosphorylation of the activation loop at Thr-308 by PDPK1/PDK1 is a prerequisite for full activation. Phosphorylation by mTORC2 in response to growth factors plays a key role in AKT1 activation: mTORC2 phosphorylates different sites depending on the context, such as Thr-450, Ser-473, Ser-477 or Thr-479, thereby facilitating subsequent phosphorylation of the activation loop by PDPK1/PDK1. Phosphorylation at Ser-473 by mTORC2 promotes ubiquitination and degradation by the proteasome. Also phosphorylated at Ser-477 and Thr-479 by CDK2, facilitating subsequent phosphorylation of the activation loop by PDPK1/PDK1. Activated TNK2 phosphorylates it on Tyr-176 resulting in its binding to the anionic plasma membrane phospholipid PA. This phosphorylated form localizes to the cell membrane, where it is targeted by PDPK1 and PDPK2 for further phosphorylations on Thr-308 and Ser-473 leading to its activation. Phosphorylated at Thr-308 and Ser-473 by IKBKE and TBK1. Ser-473 phosphorylation is enhanced by interaction with AGAP2 isoform 2 (PIKE-A). Ser-473 phosphorylation is enhanced by signaling through activated FLT3. Ser-473 is dephosphorylated by PHLPP. Dephosphorylated at Thr-308 and Ser-473 by PP2A phosphatase. The phosphorylated form of PPP2R5B is required for bridging AKT1 with PP2A phosphatase. Ser-473 is dephosphorylated by CPPED1, leading to termination of signaling. AIM2 acts as an inhibitor of AKT1 by inhibiting phosphorylation Ser-473: AIM2 acts both by inhibiting the activity of PRKDC/DNA-PK kinase and promoting dephosphorylation by PP2A phosphatase. In terms of processing, ubiquitinated; undergoes both 'Lys-48'- and 'Lys-63'-linked polyubiquitination. TRAF6-induced 'Lys-63'-linked AKT1 ubiquitination is critical for phosphorylation and activation. When ubiquitinated, it translocates to the plasma membrane, where it becomes phosphorylated. When fully phosphorylated and translocated into the nucleus, undergoes 'Lys-48'-polyubiquitination catalyzed by TTC3, leading to its degradation by the proteasome. Also ubiquitinated by TRIM13 leading to its proteasomal degradation. Ubiquitinated via 'Lys-48'-linked polyubiquitination by ZNRF1, leading to its degradation by the proteasome. Phosphorylated, undergoes 'Lys-48'-linked polyubiquitination preferentially at Lys-284 catalyzed by MUL1, leading to its proteasomal degradation. Post-translationally, acetylated on Lys-14 and Lys-20 by the histone acetyltransferases EP300 and KAT2B. Acetylation results in reduced phosphorylation and inhibition of activity. Deacetylated at Lys-14 and Lys-20 by SIRT1. SIRT1-mediated deacetylation relieves the inhibition. Cleavage by caspase-3/CASP3. Cleaved at the caspase-3 consensus site Asp-462 during apoptosis, resulting in down-regulation of the AKT signaling pathway and decreased cell survival. As to expression, widely expressed. Low levels found in liver with slightly higher levels present in thymus and testis.

It localises to the cytoplasm. It is found in the nucleus. Its subcellular location is the cell membrane. The protein resides in the mitochondrion intermembrane space. The catalysed reaction is L-seryl-[protein] + ATP = O-phospho-L-seryl-[protein] + ADP + H(+). It catalyses the reaction L-threonyl-[protein] + ATP = O-phospho-L-threonyl-[protein] + ADP + H(+). Three specific sites, one in the kinase domain (Thr-308) and the two other ones in the C-terminal regulatory region (Ser-473 and Tyr-474), need to be phosphorylated for its full activation. Functionally, AKT1 is one of 3 closely related serine/threonine-protein kinases (AKT1, AKT2 and AKT3) called the AKT kinase, and which regulate many processes including metabolism, proliferation, cell survival, growth and angiogenesis. This is mediated through serine and/or threonine phosphorylation of a range of downstream substrates. Over 100 substrate candidates have been reported so far, but for most of them, no isoform specificity has been reported. AKT is responsible of the regulation of glucose uptake by mediating insulin-induced translocation of the SLC2A4/GLUT4 glucose transporter to the cell surface. Phosphorylation of PTPN1 at 'Ser-50' negatively modulates its phosphatase activity preventing dephosphorylation of the insulin receptor and the attenuation of insulin signaling. Phosphorylation of TBC1D4 triggers the binding of this effector to inhibitory 14-3-3 proteins, which is required for insulin-stimulated glucose transport. AKT also regulates the storage of glucose in the form of glycogen by phosphorylating GSK3A at 'Ser-21' and GSK3B at 'Ser-9', resulting in inhibition of its kinase activity. Phosphorylation of GSK3 isoforms by AKT is also thought to be one mechanism by which cell proliferation is driven. AKT also regulates cell survival via the phosphorylation of MAP3K5 (apoptosis signal-related kinase). Phosphorylation of 'Ser-83' decreases MAP3K5 kinase activity stimulated by oxidative stress and thereby prevents apoptosis. AKT mediates insulin-stimulated protein synthesis by phosphorylating TSC2 at 'Ser-939' and 'Thr-1462', thereby activating the mTORC1 signaling pathway, and leading to both phosphorylation of 4E-BP1 and in activation of RPS6KB1. Also regulates the mTORC1 signaling pathway by catalyzing phosphorylation of CASTOR1 and DEPDC5. AKT plays a role as key modulator of the AKT-mTOR signaling pathway controlling the tempo of the process of newborn neurons integration during adult neurogenesis, including correct neuron positioning, dendritic development and synapse formation. Part of a positive feedback loop of mTORC2 signaling by mediating phosphorylation of MAPKAP1/SIN1, promoting mTORC2 activation. AKT is involved in the phosphorylation of members of the FOXO factors (Forkhead family of transcription factors), leading to binding of 14-3-3 proteins and cytoplasmic localization. In particular, FOXO1 is phosphorylated at 'Thr-24', 'Ser-256' and 'Ser-319'. FOXO3 and FOXO4 are phosphorylated on equivalent sites. AKT has an important role in the regulation of NF-kappa-B-dependent gene transcription and positively regulates the activity of CREB1 (cyclic AMP (cAMP)-response element binding protein). The phosphorylation of CREB1 induces the binding of accessory proteins that are necessary for the transcription of pro-survival genes such as BCL2 and MCL1. AKT phosphorylates 'Ser-454' on ATP citrate lyase (ACLY), thereby potentially regulating ACLY activity and fatty acid synthesis. Activates the 3B isoform of cyclic nucleotide phosphodiesterase (PDE3B) via phosphorylation of 'Ser-273', resulting in reduced cyclic AMP levels and inhibition of lipolysis. Phosphorylates PIKFYVE on 'Ser-318', which results in increased PI(3)P-5 activity. The Rho GTPase-activating protein DLC1 is another substrate and its phosphorylation is implicated in the regulation cell proliferation and cell growth. Signals downstream of phosphatidylinositol 3-kinase (PI(3)K) to mediate the effects of various growth factors such as platelet-derived growth factor (PDGF), epidermal growth factor (EGF), insulin and insulin-like growth factor 1 (IGF1). AKT mediates the antiapoptotic effects of IGF1. Essential for the SPATA13-mediated regulation of cell migration and adhesion assembly and disassembly. May be involved in the regulation of the placental development. Phosphorylates STK4/MST1 at 'Thr-120' and 'Thr-387' leading to inhibition of its: kinase activity, nuclear translocation, autophosphorylation and ability to phosphorylate FOXO3. Phosphorylates STK3/MST2 at 'Thr-117' and 'Thr-384' leading to inhibition of its: cleavage, kinase activity, autophosphorylation at Thr-180, binding to RASSF1 and nuclear translocation. Phosphorylates SRPK2 and enhances its kinase activity towards SRSF2 and ACIN1 and promotes its nuclear translocation. Phosphorylates RAF1 at 'Ser-259' and negatively regulates its activity. Phosphorylation of BAD stimulates its pro-apoptotic activity. Phosphorylates KAT6A at 'Thr-369' and this phosphorylation inhibits the interaction of KAT6A with PML and negatively regulates its acetylation activity towards p53/TP53. Phosphorylates palladin (PALLD), modulating cytoskeletal organization and cell motility. Phosphorylates prohibitin (PHB), playing an important role in cell metabolism and proliferation. Phosphorylates CDKN1A, for which phosphorylation at 'Thr-145' induces its release from CDK2 and cytoplasmic relocalization. These recent findings indicate that the AKT1 isoform has a more specific role in cell motility and proliferation. Phosphorylates CLK2 thereby controlling cell survival to ionizing radiation. Phosphorylates PCK1 at 'Ser-90', reducing the binding affinity of PCK1 to oxaloacetate and changing PCK1 into an atypical protein kinase activity using GTP as donor. Also acts as an activator of TMEM175 potassium channel activity in response to growth factors: forms the lysoK(GF) complex together with TMEM175 and acts by promoting TMEM175 channel activation, independently of its protein kinase activity. Acts as a negative regulator of the cGAS-STING pathway by mediating phosphorylation of CGAS during mitosis, leading to its inhibition. Acts as a regulator of mitochondrial calcium uptake by mediating phosphorylation of MICU1 in the mitochondrial intermembrane space, impairing MICU1 maturation. Acts as an inhibitor of tRNA methylation by mediating phosphorylation of the N-terminus of METTL1, thereby inhibiting METTL1 methyltransferase activity. In response to LPAR1 receptor pathway activation, phosphorylates Rabin8/RAB3IP which alters its activity and phosphorylates WDR44 which induces WDR44 binding to Rab11, thereby switching Rab11 vesicular function from preciliary trafficking to endocytic recycling. This chain is RAC-alpha serine/threonine-protein kinase (Akt1), found in Mus musculus (Mouse).